The primary structure comprises 358 residues: Aromatic amino acid aminotransferase (358 aa).

Lys222 carries the post-translational modification N6-(pyridoxal phosphate)lysine.

The protein belongs to the class-II pyridoxal-phosphate-dependent aminotransferase family. As to quaternary structure, homodimer. Pyridoxal 5'-phosphate is required as a cofactor.

It carries out the reaction an aromatic L-alpha-amino acid + 2-oxoglutarate = an aromatic oxo-acid + L-glutamate. Functionally, aminotransferase that catalyzes the conversion of aromatic amino acids and 2-oxoglutarate into corresponding aromatic oxo acids and L-glutamate. The protein is Aromatic amino acid aminotransferase of Mycobacterium sp. (strain JLS).